Reading from the N-terminus, the 104-residue chain is Small ribosomal subunit protein uS10 (104 aa).

This sequence belongs to the universal ribosomal protein uS10 family. Part of the 30S ribosomal subunit.

Involved in the binding of tRNA to the ribosomes. This is Small ribosomal subunit protein uS10 from Gloeobacter violaceus (strain ATCC 29082 / PCC 7421).